The chain runs to 404 residues: Nicotinate phosphoribosyltransferase (404 aa).

Position 225 is a phosphohistidine; by autocatalysis (histidine 225).

This sequence belongs to the NAPRTase family. Post-translationally, transiently phosphorylated on a His residue during the reaction cycle. Phosphorylation strongly increases the affinity for substrates and increases the rate of nicotinate D-ribonucleotide production. Dephosphorylation regenerates the low-affinity form of the enzyme, leading to product release.

It carries out the reaction nicotinate + 5-phospho-alpha-D-ribose 1-diphosphate + ATP + H2O = nicotinate beta-D-ribonucleotide + ADP + phosphate + diphosphate. Its pathway is cofactor biosynthesis; NAD(+) biosynthesis; nicotinate D-ribonucleotide from nicotinate: step 1/1. Functionally, catalyzes the synthesis of beta-nicotinate D-ribonucleotide from nicotinate and 5-phospho-D-ribose 1-phosphate at the expense of ATP. In Methanosarcina acetivorans (strain ATCC 35395 / DSM 2834 / JCM 12185 / C2A), this protein is Nicotinate phosphoribosyltransferase.